The primary structure comprises 260 residues: Flagellar basal-body rod protein FlgG (260 aa).

It belongs to the flagella basal body rod proteins family. As to quaternary structure, the basal body constitutes a major portion of the flagellar organelle and consists of four rings (L,P,S, and M) mounted on a central rod. The rod consists of about 26 subunits of FlgG in the distal portion, and FlgB, FlgC and FlgF are thought to build up the proximal portion of the rod with about 6 subunits each.

It is found in the bacterial flagellum basal body. The sequence is that of Flagellar basal-body rod protein FlgG (flgG) from Buchnera aphidicola subsp. Schizaphis graminum (strain Sg).